The following is a 382-amino-acid chain: Serine/threonine-protein kinase US3 homolog (382 aa).

Residues 1–10 are compositionally biased toward basic and acidic residues; that stretch reads MENKQCDHLT. The interval 1-75 is disordered; sequence MENKQCDHLT…ASESDEDDDD (75 aa). The span at 12-24 shows a compositional bias: polar residues; sequence WFSTTSDASESMD. Acidic residues predominate over residues 45 to 75; it reads ADEDLYSDISEGDLEYSDCDSASESDEDDDD. The region spanning 93-379 is the Protein kinase domain; sequence YTVIKTLTPG…AEELLSYPMF (287 aa). Residues 99–107 and lysine 122 contribute to the ATP site; that span reads LTPGSEGRV. The active-site Proton acceptor is the aspartate 207.

Belongs to the protein kinase superfamily. Ser/Thr protein kinase family. In terms of processing, phosphorylated by protein 49; this phosphorylation regulates subsequent phosphorylation of proteins 26 and 29 by US3 homolog. Autophosphorylated.

The protein resides in the host cytoplasm. Its subcellular location is the host nucleus. It carries out the reaction L-seryl-[protein] + ATP = O-phospho-L-seryl-[protein] + ADP + H(+). The enzyme catalyses L-threonyl-[protein] + ATP = O-phospho-L-threonyl-[protein] + ADP + H(+). Multifunctional serine/threonine kinase that plays a role in several processes including egress of virus particles from the nucleus, modulation of the actin cytoskeleton and inhibition of apoptosis. Phosphorylates protein 26 and 29, two critical regulators of capsid budding from nucleus to endoplasmic reticulum, thereby facilitating virion egress. Modulates and redistributes host components of the nuclear envelope, including LMNA, emerin/EMD and the nuclear matrix protein MATR3. Phosphorylates envelope glycoprotein B (gB), probably to direct it to the cell surface. Promotes virus intracellular spread by restructuring host cell cytoskeleton. Blocks host apoptosis to extend cell survival and allow efficient viral replication. Promotes viral gene expression by phosphorylating host HDAC2 to reduce viral genome silencing. This chain is Serine/threonine-protein kinase US3 homolog, found in Equine herpesvirus 1 (strain Ab4p) (EHV-1).